A 431-amino-acid chain; its full sequence is MSDELSPEVFDAVCRQADQAARAQERLAQANTEAKNELLLAIADALDEHAADIEAANALDMLESKENGMDAGKLDRLLFDVPRVAAAAQGVRHVATLPDPVGEIVRGYNLPNGLRLTQTRVPMGVIGMIYEARPNVTVDVSSLCLKSGNAALLRGGHAAERTNAATLGVIAPVLEAHGFESTLVQSVDQYGRAGATAMMEARGHIDVLVPRGGAGLIQAVVRNSKVPVIETGAGNVHIYIDKSGDLAKAIPIIINAKTQRVGVCNAAEKLLVHKDVAAEFLPQIAAALAEANVVLQTDTTSYDIISGAAIEGLDLNHATEEDWDTEYLALKMGIKVVPDLDTAIDHINTHSTGHTESIIAEDYAAIEEFTKRIDSAVVVVNASTRFTDGGVFGFGAELGISTQKMHARGPMGLREMTTTKWIGYGTGQVRA.

The protein belongs to the gamma-glutamyl phosphate reductase family.

It is found in the cytoplasm. The catalysed reaction is L-glutamate 5-semialdehyde + phosphate + NADP(+) = L-glutamyl 5-phosphate + NADPH + H(+). It participates in amino-acid biosynthesis; L-proline biosynthesis; L-glutamate 5-semialdehyde from L-glutamate: step 2/2. Catalyzes the NADPH-dependent reduction of L-glutamate 5-phosphate into L-glutamate 5-semialdehyde and phosphate. The product spontaneously undergoes cyclization to form 1-pyrroline-5-carboxylate. This Bifidobacterium longum subsp. infantis (strain ATCC 15697 / DSM 20088 / JCM 1222 / NCTC 11817 / S12) protein is Gamma-glutamyl phosphate reductase.